A 165-amino-acid chain; its full sequence is Ribosome maturation factor RimM (165 aa).

Residues 94 to 165 (EDEFYIADLN…YVVLNYQREI (72 aa)) form the PRC barrel domain.

Belongs to the RimM family. Binds ribosomal protein uS19.

The protein resides in the cytoplasm. Its function is as follows. An accessory protein needed during the final step in the assembly of 30S ribosomal subunit, possibly for assembly of the head region. Essential for efficient processing of 16S rRNA. May be needed both before and after RbfA during the maturation of 16S rRNA. It has affinity for free ribosomal 30S subunits but not for 70S ribosomes. The polypeptide is Ribosome maturation factor RimM (Rickettsia felis (strain ATCC VR-1525 / URRWXCal2) (Rickettsia azadi)).